A 65-amino-acid polypeptide reads, in one-letter code: UPF0434 protein PSHAa1659 (65 aa).

The protein belongs to the UPF0434 family.

This chain is UPF0434 protein PSHAa1659, found in Pseudoalteromonas translucida (strain TAC 125).